The following is a 179-amino-acid chain: Mediator of RNA polymerase II transcription subunit 29 (179 aa).

This sequence belongs to the Mediator complex subunit 29 family. In terms of assembly, component of the Mediator complex.

The protein localises to the nucleus. Its function is as follows. Component of the Mediator complex, a coactivator involved in the regulated transcription of nearly all RNA polymerase II-dependent genes. Mediator functions as a bridge to convey information from gene-specific regulatory proteins to the basal RNA polymerase II transcription machinery. Mediator is recruited to promoters by direct interactions with regulatory proteins and serves as a scaffold for the assembly of a functional preinitiation complex with RNA polymerase II and the general transcription factors. The sequence is that of Mediator of RNA polymerase II transcription subunit 29 (med29) from Danio rerio (Zebrafish).